Reading from the N-terminus, the 54-residue chain is Large ribosomal subunit protein bL33 (54 aa).

The protein belongs to the bacterial ribosomal protein bL33 family.

The sequence is that of Large ribosomal subunit protein bL33 from Opitutus terrae (strain DSM 11246 / JCM 15787 / PB90-1).